The following is a 675-amino-acid chain: Protein PALS1 (675 aa).

Disordered stretches follow at residues 1 to 34 (MTTS…KHRE) and 51 to 78 (RRSA…KKQE). The tract at residues 1-345 (MTTSHMNGHV…QQIKPPPAKE (345 aa)) is required for the correct localization of PALS1 and PATJ at cell-cell contacts and the normal formation of tight junctions and adherens junctions. Composition is skewed to basic and acidic residues over residues 10-34 (VTEE…KHRE) and 54-78 (AQLE…KKQE). Residues Ser-14 and Ser-25 each carry the phosphoserine modification. The tract at residues 21–140 (VDLASPEEHQ…LKHIQHTLVD (120 aa)) is interaction with PARD6B. Phosphoserine is present on residues Ser-83 and Ser-84. 2 L27 domains span residues 120–177 (KILE…NKAS) and 179–235 (PFPL…MQLE). The interaction with LIN7C stretch occupies residues 181 to 243 (PLISNAQDLA…LEPITDERVY (63 aa)). The region spanning 256–336 (IVRIEKARDI…TLTFVLIPSQ (81 aa)) is the PDZ domain. Residues 345-417 (ETVIHVKAHF…PGKSFQQQRE (73 aa)) enclose the SH3 domain. Residues 479–660 (KRPIILIGPQ…AYQELLRLIN (182 aa)) enclose the Guanylate kinase-like domain. An ATP-binding site is contributed by 486–493 (GPQNCGQN).

It belongs to the MAGUK family. Heterodimer with MPP1. Forms a heterotrimeric complex composed of PALS1, LIN7B and PATJ; the N-terminal L27 domain of PALS1 interacts with the L27 domain of PATJ and the C-terminal L27 domain of PALS1 interacts with the L27 domain of LIN7B. Component of a complex composed of PALS1, CRB1 and MPP4. Component of a complex whose core is composed of ARHGAP17, AMOT, PALS1, PATJ and PARD3/PAR3. Component of a complex composed of PALS1, CRB1 and EPB41L5. Within the complex, interacts (via HOOK domain) with EPB41L5 (via FERM domain), and interacts with CRB1 (via intracellular domain). Component of a complex composed of PALS1, MPP3 and CRB1; PALS1 acts as a bridging protein between MPP3 (via guanylate kinase-like domain) and CRB1. Component of a complex composed of CRB3, PALS1 and PATJ. As part of the Crumbs complex; interacts with WWP1, the interaction is enhanced by AMOTL2 and facilitates WWP1 localization to the plasma membrane. The Crumbs complex promotes monoubiquitination of AMOTL2 by WWP1, which activates the Hippo signaling pathway. Interacts (via PDZ domain) with PATJ (via N-terminus). Interacts with EZR. Interacts (via PDZ domain) with CRB1 (via C-terminal ERLI motif). While the PDZ domain is sufficient for interaction with CRB1, the adjacent SH3 and guanylate kinase-like domains are likely to contribute to a high affinity interaction. Interacts with WWTR1/TAZ (via WW domain). Interacts with MPP7. Interacts (via PDZ domain) with CRB3 (via C-terminus). Interacts with LIN7C. Interacts with MPDZ. Interacts with PARD6B. Interacts with SC6A1. Interacts with CDH5; the interaction promotes PALS1 localization to cell junctions and is required for CDH5-mediated vascular lumen formation and endothelial cell. Interacts with NPHP1 (via coiled coil and SH3 domains). Interacts with NPHP4. Interacts with CRB2. As to quaternary structure, (Microbial infection) Interacts (via PDZ domain) with human coronaviruses SARS-CoV and, probably, SARS-CoV-2 envelope small membrane protein E (via C-terminus); this inhibits the interaction between PALS1 and CRB3. Expressed at the outer limiting membrane in the retina (at protein level). Expressed in T lymphocytes (at protein level). Expressed in the kidney (at protein level).

It is found in the golgi apparatus. It localises to the cell membrane. The protein resides in the endomembrane system. The protein localises to the cell junction. Its subcellular location is the tight junction. It is found in the adherens junction. It localises to the cell projection. The protein resides in the axon. The protein localises to the perikaryon. Its subcellular location is the apical cell membrane. It is found in the endoplasmic reticulum-Golgi intermediate compartment. Functionally, plays a role in tight junction biogenesis and in the establishment of cell polarity in epithelial cells. Also involved in adherens junction biogenesis by ensuring correct localization of the exocyst complex protein EXOC4/SEC8 which allows trafficking of adherens junction structural component CDH1 to the cell surface. Plays a role through its interaction with CDH5 in vascular lumen formation and endothelial membrane polarity. Required during embryonic and postnatal retinal development. Required for the maintenance of cerebellar progenitor cells in an undifferentiated proliferative state, preventing premature differentiation, and is required for cerebellar histogenesis, fissure formation, cerebellar layer organization and cortical development. Plays a role in neuronal progenitor cell survival, potentially via promotion of mTOR signaling. Plays a role in the radial and longitudinal extension of the myelin sheath in Schwann cells. May modulate SC6A1/GAT1-mediated GABA uptake by stabilizing the transporter. Plays a role in the T-cell receptor-mediated activation of NF-kappa-B. Required for localization of EZR to the apical membrane of parietal cells and may play a role in the dynamic remodeling of the apical cytoskeleton. Required for the normal polarized localization of the vesicular marker STX4. Required for the correct trafficking of the myelin proteins PMP22 and MAG. Involved in promoting phosphorylation and cytoplasmic retention of transcriptional coactivators YAP1 and WWTR1/TAZ which leads to suppression of TGFB1-dependent transcription of target genes such as CCN2/CTGF, SERPINE1/PAI1, SNAI1/SNAIL1 and SMAD7. In terms of biological role, (Microbial infection) Acts as an interaction partner for human coronaviruses SARS-CoV and, probably, SARS-CoV-2 envelope protein E which results in delayed formation of tight junctions and disregulation of cell polarity. This Homo sapiens (Human) protein is Protein PALS1.